A 92-amino-acid polypeptide reads, in one-letter code: Small ribosomal subunit protein uS19 (92 aa).

This sequence belongs to the universal ribosomal protein uS19 family.

Protein S19 forms a complex with S13 that binds strongly to the 16S ribosomal RNA. This is Small ribosomal subunit protein uS19 from Streptococcus pyogenes serotype M49 (strain NZ131).